Here is a 458-residue protein sequence, read N- to C-terminus: Argininosuccinate lyase (458 aa).

Belongs to the lyase 1 family. Argininosuccinate lyase subfamily.

It localises to the cytoplasm. It catalyses the reaction 2-(N(omega)-L-arginino)succinate = fumarate + L-arginine. It participates in amino-acid biosynthesis; L-arginine biosynthesis; L-arginine from L-ornithine and carbamoyl phosphate: step 3/3. The protein is Argininosuccinate lyase of Salmonella agona (strain SL483).